The sequence spans 301 residues: MSQDSVKSLQSTFKTVGVVGRPRNDSTLQMHKNIFHWLCEQGYQVLVENEIGKALNLSENHLASLDQIGQHAQLAIVIGGDGNMLSHARILCKYNTPLIGINRGNLGFLTDIDPKNAYAQLEACLNGEFFVEERFLLEAVVKRHGETVARGNAINELVIHPAKIAHMIDFHVYIDDKFAFSQRSDGLIVATPTGSTAYSLSAGGPILTPQLNAIALVPMFPHTLSSRPLVVDGNSKISVNFAEYNIPQLEISCDSQLALDICCNDVVHIQKSPYKLRLLHLHNYNYYNVLSSKLGWLKKLF.

Residue aspartate 81 is the Proton acceptor of the active site. Residues 81–82 (DG), 155–156 (NE), histidine 166, arginine 183, aspartate 185, 196–201 (TAYSLS), and glutamine 256 each bind NAD(+).

The protein belongs to the NAD kinase family. A divalent metal cation is required as a cofactor.

The protein localises to the cytoplasm. The catalysed reaction is NAD(+) + ATP = ADP + NADP(+) + H(+). Involved in the regulation of the intracellular balance of NAD and NADP, and is a key enzyme in the biosynthesis of NADP. Catalyzes specifically the phosphorylation on 2'-hydroxyl of the adenosine moiety of NAD to yield NADP. The polypeptide is NAD kinase (Mannheimia succiniciproducens (strain KCTC 0769BP / MBEL55E)).